Consider the following 494-residue polypeptide: Probable cytosol aminopeptidase (494 aa).

Positions 260 and 265 each coordinate Mn(2+). K272 is an active-site residue. D283, D342, and E344 together coordinate Mn(2+). The active site involves R346.

Belongs to the peptidase M17 family. Mn(2+) serves as cofactor.

The protein resides in the cytoplasm. It catalyses the reaction Release of an N-terminal amino acid, Xaa-|-Yaa-, in which Xaa is preferably Leu, but may be other amino acids including Pro although not Arg or Lys, and Yaa may be Pro. Amino acid amides and methyl esters are also readily hydrolyzed, but rates on arylamides are exceedingly low.. The enzyme catalyses Release of an N-terminal amino acid, preferentially leucine, but not glutamic or aspartic acids.. In terms of biological role, presumably involved in the processing and regular turnover of intracellular proteins. Catalyzes the removal of unsubstituted N-terminal amino acids from various peptides. This is Probable cytosol aminopeptidase from Bacillus cereus (strain AH187).